The primary structure comprises 213 residues: ATP synthase peripheral stalk subunit OSCP, mitochondrial (213 aa).

Residues 1-23 (MASQAVSGLSRQVRCFSTSVVRP) constitute a mitochondrion transit peptide. The short motif at 5 to 23 (AVSGLSRQVRCFSTSVVRP) is the SIFI-degron element. N6-acetyllysine occurs at positions 54, 60, 70, and 73. The residue at position 90 (K90) is an N6-succinyllysine. 3 positions are modified to N6-acetyllysine; alternate: K100, K158, and K162. K100, K158, and K162 each carry N6-succinyllysine; alternate. Residues K172, K176, and K192 each carry the N6-acetyllysine modification. The residue at position 199 (K199) is an N6-succinyllysine.

This sequence belongs to the ATPase delta chain family. In terms of assembly, component of the ATP synthase complex composed at least of ATP5F1A/subunit alpha, ATP5F1B/subunit beta, ATP5MC1/subunit c (homooctomer), MT-ATP6/subunit a, MT-ATP8/subunit 8, ATP5ME/subunit e, ATP5MF/subunit f, ATP5MG/subunit g, ATP5MK/subunit k, ATP5MJ/subunit j, ATP5F1C/subunit gamma, ATP5F1D/subunit delta, ATP5F1E/subunit epsilon, ATP5PF/subunit F6, ATP5PB/subunit b, ATP5PD/subunit d, ATP5PO/subunit OSCP. ATP synthase complex consists of a soluble F(1) head domain (subunits alpha(3) and beta(3)) - the catalytic core - and a membrane F(0) domain - the membrane proton channel (subunits c, a, 8, e, f, g, k and j). These two domains are linked by a central stalk (subunits gamma, delta, and epsilon) rotating inside the F1 region and a stationary peripheral stalk (subunits F6, b, d, and OSCP). Post-translationally, acetylation at Lys-162 decreases ATP production. Deacetylated by SIRT3. In terms of processing, in response to mitochondrial stress, the precursor protein is ubiquitinated by the SIFI complex in the cytoplasm before mitochondrial import, leading to its degradation. Within the SIFI complex, UBR4 initiates ubiquitin chain that are further elongated or branched by KCMF1.

It is found in the mitochondrion. The protein localises to the mitochondrion inner membrane. Subunit OSCP, of the mitochondrial membrane ATP synthase complex (F(1)F(0) ATP synthase or Complex V) that produces ATP from ADP in the presence of a proton gradient across the membrane which is generated by electron transport complexes of the respiratory chain. ATP synthase complex consist of a soluble F(1) head domain - the catalytic core - and a membrane F(1) domain - the membrane proton channel. These two domains are linked by a central stalk rotating inside the F(1) region and a stationary peripheral stalk. During catalysis, ATP synthesis in the catalytic domain of F(1) is coupled via a rotary mechanism of the central stalk subunits to proton translocation. In vivo, can only synthesize ATP although its ATP hydrolase activity can be activated artificially in vitro. Part of the complex F(0) domain. Part of the complex F(0) domain and the peripheric stalk, which acts as a stator to hold the catalytic alpha(3)beta(3) subcomplex and subunit a/ATP6 static relative to the rotary elements. The polypeptide is ATP synthase peripheral stalk subunit OSCP, mitochondrial (Sus scrofa (Pig)).